Reading from the N-terminus, the 624-residue chain is 1-deoxy-D-xylulose-5-phosphate synthase (624 aa).

Residues His-74 and 115 to 117 each bind thiamine diphosphate; that span reads GHS. Position 146 (Asp-146) interacts with Mg(2+). Residues 147 to 148, Asn-175, Tyr-286, and Glu-367 each bind thiamine diphosphate; that span reads GA. Asn-175 contacts Mg(2+).

The protein belongs to the transketolase family. DXPS subfamily. In terms of assembly, homodimer. The cofactor is Mg(2+). Requires thiamine diphosphate as cofactor.

The enzyme catalyses D-glyceraldehyde 3-phosphate + pyruvate + H(+) = 1-deoxy-D-xylulose 5-phosphate + CO2. It functions in the pathway metabolic intermediate biosynthesis; 1-deoxy-D-xylulose 5-phosphate biosynthesis; 1-deoxy-D-xylulose 5-phosphate from D-glyceraldehyde 3-phosphate and pyruvate: step 1/1. Functionally, catalyzes the acyloin condensation reaction between C atoms 2 and 3 of pyruvate and glyceraldehyde 3-phosphate to yield 1-deoxy-D-xylulose-5-phosphate (DXP). The polypeptide is 1-deoxy-D-xylulose-5-phosphate synthase (Alkaliphilus oremlandii (strain OhILAs) (Clostridium oremlandii (strain OhILAs))).